Consider the following 342-residue polypeptide: S-adenosylmethionine:tRNA ribosyltransferase-isomerase (342 aa).

Belongs to the QueA family. As to quaternary structure, monomer.

The protein localises to the cytoplasm. It catalyses the reaction 7-aminomethyl-7-carbaguanosine(34) in tRNA + S-adenosyl-L-methionine = epoxyqueuosine(34) in tRNA + adenine + L-methionine + 2 H(+). It participates in tRNA modification; tRNA-queuosine biosynthesis. In terms of biological role, transfers and isomerizes the ribose moiety from AdoMet to the 7-aminomethyl group of 7-deazaguanine (preQ1-tRNA) to give epoxyqueuosine (oQ-tRNA). The chain is S-adenosylmethionine:tRNA ribosyltransferase-isomerase from Moorella thermoacetica (strain ATCC 39073 / JCM 9320).